Reading from the N-terminus, the 398-residue chain is MNDVDASIEPKRIKEVRAYVVKGGGADYHDQSSEHWILGYIATPISIYPEYRASRASWGLNVLGSVVVEVESSDGEVGFGISTGGYPAAWIIENHLSRFVVGKYVGEVEKTWDQMFKATIYYGRRGIVMNAISAVDLALWDLMGKVRGLPVYDLLGGPVRDELTFYATGPRPDVAKSLGFIGGKLPLIHGPADGIEGLRENVRIFKEAREKVGDDFLLMYDCWMSLDLPYAQRLLSELKPYGLFWIEEPFIPDDYWSFGALANIAPPTLVASGEHESTVHGFRLLLELGKVNVIQPDVTWVGGVTPMIKIAALAEAYGAWVIPHGSSVYGYHFIITRVNSPFAEYLVVSPDATKIVPQFHPLLRDEPIPQNGKVRLSRKPGFGVELNRDLLVRPFKST.

Residues H29 and R55 each contribute to the substrate site. Positions 221, 247, and 274 each coordinate Mg(2+). The active-site Proton acceptor is the H324. E344 lines the substrate pocket.

The protein belongs to the mandelate racemase/muconate lactonizing enzyme family. RhamD subfamily. The cofactor is Mg(2+).

The catalysed reaction is L-rhamnonate = 2-dehydro-3-deoxy-L-rhamnonate + H2O. Catalyzes the dehydration of L-rhamnonate to 2-keto-3-deoxy-L-rhamnonate (KDR). The chain is Putative L-rhamnonate dehydratase from Caldivirga maquilingensis (strain ATCC 700844 / DSM 13496 / JCM 10307 / IC-167).